Here is an 89-residue protein sequence, read N- to C-terminus: Gallinacin-13 (89 aa).

The first 23 residues, 1-23 (MRILQLLFAIVVILLLQDAPARG), serve as a signal peptide directing secretion. 3 disulfide bridges follow: cysteine 30-cysteine 58, cysteine 37-cysteine 51, and cysteine 41-cysteine 59. The segment at 66 to 89 (PFSNPKHSVLHTAEQDPSPSLGGT) is disordered.

It belongs to the beta-defensin family. Expressed in the liver, gall bladder, kidney, small intestine, spleen, testis, ovary and male and female reproductive tracts. Not detected in the ovarian stroma and the theca and granulosa layers of the ovarian follicle.

The protein resides in the secreted. Its subcellular location is the cytoplasmic granule. Has bactericidal activity. Potent activity against E.coli, L.monocytogenes, S.typhimurium and S.pyogenes but mot against S.aureus. Functionally, has bactericidal activity. The polypeptide is Gallinacin-13 (GAL13) (Gallus gallus (Chicken)).